Reading from the N-terminus, the 684-residue chain is MSAQDFLVELGTEELPPKALASLGDAFLAGIEKGLQAAGLNYTSKQVYAAPRRLAVLLRQLDVQQPDRSINIDGPPRQAAFDAEGNPTQAALGFAKKCGVELSDIDQSGPKLRFSQHIPGKATASLLPTIVEDSLNDLPIPKRMHWGASREEFVRPTQWLVMLLGDQVVDCTILAQKAGRESRGHRFHHPENVVITTPANYVEDLRKAYVLADFAERRELISKRTAELAMQQEGSAIVPPALLDEVTALVEWPVPLVCSFEERFLEVPQEALITTMQDNQKYFCLLDSEGKLLPRFITVANVESRDPKQIVEGNEKVVRPRLTDAEFFFKQDKKQPLESFNERLKNVVFQAQLGTVFDKAERVSKLAAFIAPYIGGSAANAGRAGLLSKCDLASEMVGEFPEMQGIAGYYYALNDGEPQDVALALNEQYMPRGAGAELPQTLTGAAVAIADKLDTLVGIFGIGMLPTGSKDPYALRRAALGVLRILIEKQLDLDLTTAVEFAVKQFGTKVKAAGLSEQVLEFIFDRLRARYEDEGIDVATYLSVRALKPGSALDFDQRVQAVQAFRKLPEANALAAANKRVSNLLGKAEGAIADQVEPKYFDNANEFSLYSAIQQADQAVQPMASARQYNEALARLAALRDPVDAFFEAVLVNAEDAKVRANRYALLSRLRGLFLGVADISLLG.

It belongs to the class-II aminoacyl-tRNA synthetase family. Tetramer of two alpha and two beta subunits.

The protein localises to the cytoplasm. The enzyme catalyses tRNA(Gly) + glycine + ATP = glycyl-tRNA(Gly) + AMP + diphosphate. This chain is Glycine--tRNA ligase beta subunit, found in Pseudomonas entomophila (strain L48).